A 632-amino-acid chain; its full sequence is Chaperone protein HtpG (632 aa).

Residues 1-343 (MSEQTINNKE…SNDLALNVSR (343 aa)) are a; substrate-binding. A b region spans residues 344 to 560 (EILQDNKVTQ…DFEMGTQMAK (217 aa)). The c stretch occupies residues 561–632 (LLEAAGQAAP…LSAMNQLLSK (72 aa)).

It belongs to the heat shock protein 90 family. In terms of assembly, homodimer.

Its subcellular location is the cytoplasm. Its function is as follows. Molecular chaperone. Has ATPase activity. The sequence is that of Chaperone protein HtpG from Aliivibrio salmonicida (strain LFI1238) (Vibrio salmonicida (strain LFI1238)).